We begin with the raw amino-acid sequence, 476 residues long: Sulfate adenylyltransferase subunit 1 (476 aa).

The region spanning Lys24–Glu239 is the tr-type G domain. A G1 region spans residues Gly33–Ser40. Gly33–Ser40 is a GTP binding site. A G2 region spans residues Gly91 to Asp95. The segment at Asp112–Gly115 is G3. Residues Asp112 to His116 and Asn167 to Asp170 each bind GTP. The interval Asn167–Asp170 is G4. The G5 stretch occupies residues Ser205–Leu207.

The protein belongs to the TRAFAC class translation factor GTPase superfamily. Classic translation factor GTPase family. CysN/NodQ subfamily. In terms of assembly, heterodimer composed of CysD, the smaller subunit, and CysN.

It catalyses the reaction sulfate + ATP + H(+) = adenosine 5'-phosphosulfate + diphosphate. The protein operates within sulfur metabolism; hydrogen sulfide biosynthesis; sulfite from sulfate: step 1/3. Its function is as follows. With CysD forms the ATP sulfurylase (ATPS) that catalyzes the adenylation of sulfate producing adenosine 5'-phosphosulfate (APS) and diphosphate, the first enzymatic step in sulfur assimilation pathway. APS synthesis involves the formation of a high-energy phosphoric-sulfuric acid anhydride bond driven by GTP hydrolysis by CysN coupled to ATP hydrolysis by CysD. The polypeptide is Sulfate adenylyltransferase subunit 1 (Vibrio parahaemolyticus serotype O3:K6 (strain RIMD 2210633)).